An 82-amino-acid chain; its full sequence is Sec-independent protein translocase protein TatA (82 aa).

The chain crosses the membrane as a helical span at residues M1–G21. The segment at K41–A82 is disordered. A compositionally biased stretch (basic and acidic residues) spans A42–A82.

It belongs to the TatA/E family. In terms of assembly, the Tat system comprises two distinct complexes: a TatABC complex, containing multiple copies of TatA, TatB and TatC subunits, and a separate TatA complex, containing only TatA subunits. Substrates initially bind to the TatABC complex, which probably triggers association of the separate TatA complex to form the active translocon.

It is found in the cell inner membrane. In terms of biological role, part of the twin-arginine translocation (Tat) system that transports large folded proteins containing a characteristic twin-arginine motif in their signal peptide across membranes. TatA could form the protein-conducting channel of the Tat system. The chain is Sec-independent protein translocase protein TatA from Vibrio campbellii (strain ATCC BAA-1116).